The sequence spans 270 residues: BPI fold-containing family A member 1 (270 aa).

Residues 1–19 form the signal peptide; that stretch reads MFLVGSLVVLCGLLAQSTA. The interval 104–109 is important for surfactant activity and antibacterial properties; the sequence is LVGGLL. N-linked (GlcNAc...) asparagine glycosylation is present at Asn-174. A disulfide bridge links Cys-196 with Cys-238.

It belongs to the BPI/LBP/Plunc superfamily. Plunc family. In terms of assembly, monomer. Interacts (via N-terminus) with SCNN1B, a subunit of the heterotrimeric epithelial sodium channel (ENaC); this inhibits proteolytic activation of ENaC. Detected in adult nasal epithelium, heart, lung, spleen, testis and salivary gland, and in embryonic nasal epithelium, lung, salivary gland and thymus.

It is found in the secreted. Its function is as follows. Lipid-binding protein which shows high specificity for the surfactant phospholipid dipalmitoylphosphatidylcholine (DPPC). Plays a role in the innate immune responses of the upper airways. Reduces the surface tension in secretions from airway epithelia and inhibits the formation of biofilm by pathogenic Gram-negative bacteria, such as P.aeruginosa and K.pneumoniae. Negatively regulates proteolytic cleavage of SCNN1G, an event that is required for activation of the epithelial sodium channel (ENaC), and thereby contributes to airway surface liquid homeostasis and proper clearance of mucus. Plays a role in the airway inflammatory response after exposure to irritants. May attract macrophages and neutrophils. The protein is BPI fold-containing family A member 1 (Bpifa1) of Rattus norvegicus (Rat).